Consider the following 471-residue polypeptide: Metal tolerance protein C1 (471 aa).

Topologically, residues 1-78 are cytoplasmic; sequence MGIIRFQILN…PGEEGEKIFR (78 aa). A helical membrane pass occupies residues 79 to 99; sequence LGLTADIGLSVAKALTGYLCG. Over 100 to 101 the chain is Vacuolar; the sequence is ST. A helical transmembrane segment spans residues 102-122; that stretch reads AIIADAAHSVSDVVLSGVALV. Residues 123 to 144 are Cytoplasmic-facing; that stretch reads SYRAANVPKDKEHPYGHGKFET. The helical transmembrane segment at 145-165 threads the bilayer; that stretch reads LGALGISAMLLATGSGIAWHA. The Vacuolar portion of the chain corresponds to 166–192; the sequence is LDLLSIALSAAPEVIHSGHHHGIDMNH. The helical transmembrane segment at 193-213 threads the bilayer; it reads PILALTVTIASISIKEGLYWI. Over 214–236 the chain is Cytoplasmic; the sequence is TKRAGEKQGSGLMMANAWHHRSD. Residues 237–257 form a helical membrane-spanning segment; sequence AISSLVALVGVGGSILGVNFL. Residues 258 to 423 lie on the Vacuolar side of the membrane; that stretch reads DPLAGLVVST…RITPHLLHSK (166 aa). The chain crosses the membrane as a helical span at residues 424–444; that stretch reads ILLQIVVAMPSTMSIQDVMIA. Over 445–471 the chain is Cytoplasmic; the sequence is AEHAEKEILKAAPNVARVSIQLSLNSE.

This sequence belongs to the cation diffusion facilitator (CDF) transporter (TC 2.A.4) family.

The protein resides in the vacuole membrane. In terms of biological role, involved in sequestration of excess metal in the cytoplasm into vacuoles to maintain metal homeostasis. The polypeptide is Metal tolerance protein C1 (MTPC1) (Arabidopsis thaliana (Mouse-ear cress)).